We begin with the raw amino-acid sequence, 81 residues long: Small ribosomal subunit protein bS16 (81 aa).

Belongs to the bacterial ribosomal protein bS16 family.

The polypeptide is Small ribosomal subunit protein bS16 (Clostridium perfringens (strain ATCC 13124 / DSM 756 / JCM 1290 / NCIMB 6125 / NCTC 8237 / Type A)).